The sequence spans 114 residues: Large ribosomal subunit protein bL19 (114 aa).

This sequence belongs to the bacterial ribosomal protein bL19 family.

In terms of biological role, this protein is located at the 30S-50S ribosomal subunit interface and may play a role in the structure and function of the aminoacyl-tRNA binding site. This is Large ribosomal subunit protein bL19 (rplS) from Listeria innocua serovar 6a (strain ATCC BAA-680 / CLIP 11262).